The following is a 471-amino-acid chain: Glutamate--tRNA ligase (471 aa).

A 'HIGH' region motif is present at residues 9–19 (PSPTGYLHVGG). Residues 237–241 (KLSKR) carry the 'KMSKS' region motif. Residue lysine 240 coordinates ATP.

It belongs to the class-I aminoacyl-tRNA synthetase family. Glutamate--tRNA ligase type 1 subfamily. Monomer.

It is found in the cytoplasm. The enzyme catalyses tRNA(Glu) + L-glutamate + ATP = L-glutamyl-tRNA(Glu) + AMP + diphosphate. In terms of biological role, catalyzes the attachment of glutamate to tRNA(Glu) in a two-step reaction: glutamate is first activated by ATP to form Glu-AMP and then transferred to the acceptor end of tRNA(Glu). The sequence is that of Glutamate--tRNA ligase from Pectobacterium atrosepticum (strain SCRI 1043 / ATCC BAA-672) (Erwinia carotovora subsp. atroseptica).